We begin with the raw amino-acid sequence, 553 residues long: Putative transport protein PM1071 (553 aa).

5 consecutive transmembrane segments (helical) span residues 4–24, 28–48, 65–85, 91–111, and 157–177; these read IAIT…IGHW, GVGL…HFTN, FGLI…FFAS, LKLN…VIVI, and MAYA…MWLI. 2 consecutive RCK C-terminal domains span residues 190 to 276 and 277 to 361; these read KNFL…VLGE and EVDV…ILGN. 6 helical membrane passes run 371-391, 403-425, 439-459, 464-484, 496-516, and 533-553; these read MLPV…PFHI, AGGP…LYWF, IVLF…DTLV, LEWM…VGIV, LCGL…ANAI, and LVMF…WTLL.

It belongs to the AAE transporter (TC 2.A.81) family. YidE subfamily.

Its subcellular location is the cell membrane. This Pasteurella multocida (strain Pm70) protein is Putative transport protein PM1071.